Here is a 479-residue protein sequence, read N- to C-terminus: Glutamate--tRNA ligase 2 (479 aa).

Positions 18–28 (PSPTGFLHIGG) match the 'HIGH' region motif. The short motif at 244–248 (KLSKR) is the 'KMSKS' region element. Lys247 provides a ligand contact to ATP.

Belongs to the class-I aminoacyl-tRNA synthetase family. Glutamate--tRNA ligase type 1 subfamily. Monomer.

It localises to the cytoplasm. The enzyme catalyses tRNA(Glu) + L-glutamate + ATP = L-glutamyl-tRNA(Glu) + AMP + diphosphate. Its function is as follows. Catalyzes the attachment of glutamate to tRNA(Glu) in a two-step reaction: glutamate is first activated by ATP to form Glu-AMP and then transferred to the acceptor end of tRNA(Glu). The polypeptide is Glutamate--tRNA ligase 2 (Maricaulis maris (strain MCS10) (Caulobacter maris)).